The sequence spans 415 residues: Probable glucan 1,3-beta-glucosidase A (415 aa).

Residues 1–22 form the signal peptide; the sequence is MLSRLSQTALVALSLMTVLTEA. E210 (proton donor) is an active-site residue. Intrachain disulfides connect C290–C414 and C315–C341. E307 acts as the Nucleophile in catalysis. The segment at 335-359 is disordered; sequence SPRYGDCGNKRQGSSSGLSEQERSD.

Belongs to the glycosyl hydrolase 5 (cellulase A) family. Monomer. Mn(2+) is required as a cofactor.

The protein localises to the secreted. The enzyme catalyses Successive hydrolysis of beta-D-glucose units from the non-reducing ends of (1-&gt;3)-beta-D-glucans, releasing alpha-glucose.. Beta-glucanases participate in the metabolism of beta-glucan, the main structural component of the cell wall. It could also function biosynthetically as a transglycosylase. This Aspergillus clavatus (strain ATCC 1007 / CBS 513.65 / DSM 816 / NCTC 3887 / NRRL 1 / QM 1276 / 107) protein is Probable glucan 1,3-beta-glucosidase A (exgA).